The following is a 160-amino-acid chain: Bursicon (160 aa).

The N-terminal stretch at 1–20 (MSVLNTFLVIVALILCYVND) is a signal peptide. In terms of domain architecture, CTCK spans 38-131 (CQECQMTAVI…PLQCMCRPCG (94 aa)). 5 cysteine pairs are disulfide-bonded: C41–C90, C55–C104, C65–C125, C69–C127, and C87–C130.

Heterodimer of burs and pburs.

The protein localises to the secreted. Final heterodimeric neurohormone released at the end of the molting cycle, involved in the sclerotization (tanning) of the insect cuticle, melanization and wing spreading. The sequence is that of Bursicon from Bombyx mori (Silk moth).